The sequence spans 72 residues: Translational regulator CsrA (72 aa).

Belongs to the CsrA/RsmA family. Homodimer; the beta-strands of each monomer intercalate to form a hydrophobic core, while the alpha-helices form wings that extend away from the core.

Its subcellular location is the cytoplasm. A translational regulator that binds mRNA to regulate translation initiation and/or mRNA stability. Usually binds in the 5'-UTR at or near the Shine-Dalgarno sequence preventing ribosome-binding, thus repressing translation. Its main target seems to be the major flagellin gene, while its function is anatagonized by FliW. The protein is Translational regulator CsrA of Clostridium botulinum (strain 657 / Type Ba4).